Consider the following 212-residue polypeptide: Pyridoxine/pyridoxamine 5'-phosphate oxidase (212 aa).

Residues 8–11 and K66 contribute to the substrate site; that span reads RREY. Residues 61–66, 76–77, R82, K83, and Q105 contribute to the FMN site; these read RIVLLK and FT. The substrate site is built by Y123, R127, and S131. FMN is bound by residues 140–141 and W185; that span reads QS. 191–193 lines the substrate pocket; the sequence is RLH. R195 serves as a coordination point for FMN.

This sequence belongs to the pyridoxamine 5'-phosphate oxidase family. As to quaternary structure, homodimer. FMN serves as cofactor.

The catalysed reaction is pyridoxamine 5'-phosphate + O2 + H2O = pyridoxal 5'-phosphate + H2O2 + NH4(+). It catalyses the reaction pyridoxine 5'-phosphate + O2 = pyridoxal 5'-phosphate + H2O2. The protein operates within cofactor metabolism; pyridoxal 5'-phosphate salvage; pyridoxal 5'-phosphate from pyridoxamine 5'-phosphate: step 1/1. It functions in the pathway cofactor metabolism; pyridoxal 5'-phosphate salvage; pyridoxal 5'-phosphate from pyridoxine 5'-phosphate: step 1/1. Functionally, catalyzes the oxidation of either pyridoxine 5'-phosphate (PNP) or pyridoxamine 5'-phosphate (PMP) into pyridoxal 5'-phosphate (PLP). The chain is Pyridoxine/pyridoxamine 5'-phosphate oxidase from Shewanella sp. (strain MR-4).